The sequence spans 892 residues: Alpha-actinin-1 (892 aa).

Met1 is subject to N-acetylmethionine. Positions 1–247 (MDHYDSQQTN…IMTYVSSFYH (247 aa)) are actin-binding. Phosphoserine is present on Ser6. Residue Tyr12 is modified to Phosphotyrosine; by FAK1. 2 Calponin-homology (CH) domains span residues 31–135 (KQQR…LRFA) and 144–250 (TSAK…HAFS). N6-acetyllysine occurs at positions 95 and 195. Spectrin repeat units lie at residues 274–384 (QLME…WLLN), 394–499 (HLAE…ALER), 509–620 (QLYL…ALTE), and 630–733 (RLRK…EVEN). An interaction with DDN region spans residues 274-733 (QLMEDYEKLA…IARTINEVEN (460 aa)). At Ser471 the chain carries Phosphoserine. At Lys676 the chain carries N6-acetyllysine. Ser677 is subject to Phosphoserine. EF-hand domains are found at residues 746–781 (EQMN…LGYD) and 787–822 (QGEA…ETAD). Residues Asp759, Asp761, Ser763, Thr765, and Glu770 each coordinate Ca(2+). Ser890 is subject to Phosphoserine.

This sequence belongs to the alpha-actinin family. In terms of assembly, homodimer; antiparallel. Interacts with MYOZ2, TTID and LPP. Interacts with DDN. Interacts with PSD. Interacts with MICALL2. Interacts with DNM2 and CTTN. Interacts with PDLIM1. Interacts with PDLIM2. Interacts with PDLIM4 (via PDZ domain). Interacts with IGSF8.

The protein localises to the cytoplasm. Its subcellular location is the cytoskeleton. It localises to the myofibril. It is found in the sarcomere. The protein resides in the z line. The protein localises to the cell membrane. Its subcellular location is the cell junction. It localises to the cell projection. It is found in the ruffle. In terms of biological role, F-actin cross-linking protein which is thought to anchor actin to a variety of intracellular structures. Association with IGSF8 regulates the immune synapse formation and is required for efficient T-cell activation. The sequence is that of Alpha-actinin-1 (ACTN1) from Bos taurus (Bovine).